Consider the following 77-residue polypeptide: Protein OPG195 (77 aa).

Positions 1–17 (MRSLIIVLLFPSIIYSM) are cleaved as a signal peptide.

Belongs to the chordopoxvirinae B9 protein family.

The sequence is that of Protein OPG195 (OPG197) from Homo sapiens (Human).